A 359-amino-acid polypeptide reads, in one-letter code: Hsp70-binding protein 1 (359 aa).

The tract at residues 1–71 (MSDEGSRGSR…PPPEPMSEER (71 aa)) is disordered. The span at 23 to 37 (SSGGGGGGSSAGGSG) shows a compositional bias: gly residues. ARM repeat units follow at residues 132–174 (ENMD…TCSQ), 177–217 (AAIQ…CLVR), 220–259 (EAGL…NLLV), and 262–301 (PEHK…SLVT). A phosphoserine mark is found at Ser351 and Ser356.

Interacts with the ATP-binding domain of HSPA1A. Detected in a ternary complex containing STUB1, HSPA1A and HSPBP1. Interacts with PGLYRP1; this interaction blocks the cytotoxic activity of the PGLYRP1-HSPA1A complex. Ubiquitous.

In terms of biological role, inhibits HSPA1A chaperone activity by changing the conformation of the ATP-binding domain of HSPA1A and interfering with ATP binding. Interferes with ubiquitination mediated by STUB1 and inhibits chaperone-assisted degradation of immature CFTR. The polypeptide is Hsp70-binding protein 1 (Homo sapiens (Human)).